The sequence spans 319 residues: Acetyl-coenzyme A carboxylase carboxyl transferase subunit alpha (319 aa).

Positions 39 to 293 constitute a CoA carboxyltransferase C-terminal domain; the sequence is RLQKKSNDLT…KAVLEKQLHE (255 aa).

The protein belongs to the AccA family. Acetyl-CoA carboxylase is a heterohexamer composed of biotin carboxyl carrier protein (AccB), biotin carboxylase (AccC) and two subunits each of ACCase subunit alpha (AccA) and ACCase subunit beta (AccD).

The protein localises to the cytoplasm. It carries out the reaction N(6)-carboxybiotinyl-L-lysyl-[protein] + acetyl-CoA = N(6)-biotinyl-L-lysyl-[protein] + malonyl-CoA. It participates in lipid metabolism; malonyl-CoA biosynthesis; malonyl-CoA from acetyl-CoA: step 1/1. Component of the acetyl coenzyme A carboxylase (ACC) complex. First, biotin carboxylase catalyzes the carboxylation of biotin on its carrier protein (BCCP) and then the CO(2) group is transferred by the carboxyltransferase to acetyl-CoA to form malonyl-CoA. The protein is Acetyl-coenzyme A carboxylase carboxyl transferase subunit alpha of Neisseria meningitidis serogroup C (strain 053442).